The chain runs to 250 residues: MTALLGPDQLEADLRAIGARLYHDQHPFHALLHHGKLDRGQVQAWALNRFEYQRCIPLKDAAILARMEDPALRRIWRQRILDHDGNSASDGGIARWLHLTDALGLDRTLVESGRALLPGTRFAVQAYLHFVREKSLLEAIASSLTELFAPNIIGQRVAGMLKHYDFVSSEALAYFEHRLTEAPRDSDFALDYVKQHADTVEKQALVKAALHFKCSVLWAQLDALHVAYVAPGIVWPDAFVPDRDASRVAA.

This sequence belongs to the PqqC family.

It catalyses the reaction 6-(2-amino-2-carboxyethyl)-7,8-dioxo-1,2,3,4,7,8-hexahydroquinoline-2,4-dicarboxylate + 3 O2 = pyrroloquinoline quinone + 2 H2O2 + 2 H2O + H(+). It functions in the pathway cofactor biosynthesis; pyrroloquinoline quinone biosynthesis. Its function is as follows. Ring cyclization and eight-electron oxidation of 3a-(2-amino-2-carboxyethyl)-4,5-dioxo-4,5,6,7,8,9-hexahydroquinoline-7,9-dicarboxylic-acid to PQQ. This is Pyrroloquinoline-quinone synthase from Xanthomonas axonopodis pv. citri (strain 306).